A 280-amino-acid polypeptide reads, in one-letter code: Lipase chaperone (280 aa).

The chain crosses the membrane as a helical span at residues 5 to 22 (ALTIITIALGSLGAVYFL).

The protein belongs to the lipase chaperone family.

Its subcellular location is the cell inner membrane. Its function is as follows. May be involved in the folding of the extracellular lipase during its passage through the periplasm. In Vibrio vulnificus (strain CMCP6), this protein is Lipase chaperone (lifO).